We begin with the raw amino-acid sequence, 277 residues long: NADPH-dependent 7-cyano-7-deazaguanine reductase (277 aa).

83-85 (VES) serves as a coordination point for substrate. 85 to 86 (SK) serves as a coordination point for NADPH. Cys-184 acts as the Thioimide intermediate in catalysis. Asp-191 functions as the Proton donor in the catalytic mechanism. Residue 223-224 (HE) participates in substrate binding. Residue 252–253 (RG) coordinates NADPH.

The protein belongs to the GTP cyclohydrolase I family. QueF type 2 subfamily. In terms of assembly, homodimer.

The protein resides in the cytoplasm. The catalysed reaction is 7-aminomethyl-7-carbaguanine + 2 NADP(+) = 7-cyano-7-deazaguanine + 2 NADPH + 3 H(+). It functions in the pathway tRNA modification; tRNA-queuosine biosynthesis. Catalyzes the NADPH-dependent reduction of 7-cyano-7-deazaguanine (preQ0) to 7-aminomethyl-7-deazaguanine (preQ1). The chain is NADPH-dependent 7-cyano-7-deazaguanine reductase from Ralstonia nicotianae (strain ATCC BAA-1114 / GMI1000) (Ralstonia solanacearum).